A 1228-amino-acid polypeptide reads, in one-letter code: DNA repair protein rad5 (1228 aa).

Disordered stretches follow at residues 1-96, 194-242, 280-302, and 445-474; these read MDRH…GTLT, PPVR…VLPS, QPPT…PRVS, and KAMD…QELE. The span at 34–43 shows a compositional bias: low complexity; that stretch reads PSSSPQFSAP. Over residues 70–83 the composition is skewed to acidic residues; that stretch reads HNDDDDDDDDDDDE. Residues 211-237 are compositionally biased toward polar residues; sequence PKKSSTSQARSRSHAQAQPQPQSNTPT. Residues 445 to 454 show a composition bias toward basic and acidic residues; that stretch reads KAMDKAKAGD. The span at 465–474 shows a compositional bias: acidic residues; the sequence is EEAEEGQELE. Residues 574-784 enclose the Helicase ATP-binding domain; it reads PKQEQHCLGG…FSLVRFLRVE (211 aa). 587–594 lines the ATP pocket; sequence DEMGLGKT. The DEAH box motif lies at 735 to 738; the sequence is DEAH. The segment at 967-1012 adopts an RING-type zinc-finger fold; that stretch reads CPICAEEPMIDQAVTGCWHSACKKCLLDYIKHQTDRNEVPRCFQCR. The region spanning 1060-1216 is the Helicase C-terminal domain; it reads ALISHLRTLR…MMSDEEKKMQ (157 aa).

This sequence belongs to the SNF2/RAD54 helicase family.

Its subcellular location is the cytoplasm. The protein localises to the nucleus. Functionally, probable helicase, member of the UBC2/RAD6 epistasis group. Functions with DNA repair protein uvs-2/rad18 in error-free postreplication DNA repair. Involved in the maintenance of wild-type rates of instability of simple repetitive sequences such as poly(GT) repeats. Seems to be involved in maintaining a balance which acts in favor of error-prone non-homologous joining during DNA double-strand breaks repairs. The sequence is that of DNA repair protein rad5 (mus-41) from Neurospora crassa (strain ATCC 24698 / 74-OR23-1A / CBS 708.71 / DSM 1257 / FGSC 987).